The following is a 160-amino-acid chain: Nucleotide-binding protein Tola_0795 (160 aa).

It belongs to the YajQ family.

Nucleotide-binding protein. This is Nucleotide-binding protein Tola_0795 from Tolumonas auensis (strain DSM 9187 / NBRC 110442 / TA 4).